Here is a 223-residue protein sequence, read N- to C-terminus: Phosphoribosylformylglycinamidine synthase subunit PurQ (223 aa).

Residues 3–223 enclose the Glutamine amidotransferase type-1 domain; sequence FAVLVFPGSN…MVKSWREQHV (221 aa). The Nucleophile role is filled by Cys85. Active-site residues include His193 and Glu195.

In terms of assembly, part of the FGAM synthase complex composed of 1 PurL, 1 PurQ and 2 PurS subunits.

It is found in the cytoplasm. It catalyses the reaction N(2)-formyl-N(1)-(5-phospho-beta-D-ribosyl)glycinamide + L-glutamine + ATP + H2O = 2-formamido-N(1)-(5-O-phospho-beta-D-ribosyl)acetamidine + L-glutamate + ADP + phosphate + H(+). The catalysed reaction is L-glutamine + H2O = L-glutamate + NH4(+). The protein operates within purine metabolism; IMP biosynthesis via de novo pathway; 5-amino-1-(5-phospho-D-ribosyl)imidazole from N(2)-formyl-N(1)-(5-phospho-D-ribosyl)glycinamide: step 1/2. Its function is as follows. Part of the phosphoribosylformylglycinamidine synthase complex involved in the purines biosynthetic pathway. Catalyzes the ATP-dependent conversion of formylglycinamide ribonucleotide (FGAR) and glutamine to yield formylglycinamidine ribonucleotide (FGAM) and glutamate. The FGAM synthase complex is composed of three subunits. PurQ produces an ammonia molecule by converting glutamine to glutamate. PurL transfers the ammonia molecule to FGAR to form FGAM in an ATP-dependent manner. PurS interacts with PurQ and PurL and is thought to assist in the transfer of the ammonia molecule from PurQ to PurL. This Staphylococcus aureus (strain USA300) protein is Phosphoribosylformylglycinamidine synthase subunit PurQ.